The primary structure comprises 726 residues: Catalase-peroxidase (726 aa).

Over residues 1–12 the composition is skewed to polar residues; it reads MSTPSDQHNTLS. The tract at residues 1–34 is disordered; sequence MSTPSDQHNTLSAGKCPFHQGNSNQTAGGGTSSR. A cross-link (tryptophyl-tyrosyl-methioninium (Trp-Tyr) (with M-252)) is located at residues 105–226; sequence WHSAGTYRSA…LGATEMGLIY (122 aa). The active-site Proton acceptor is His106. Residues 226–252 constitute a cross-link (tryptophyl-tyrosyl-methioninium (Tyr-Met) (with W-105)); that stretch reads YVNPEGPNHSGDPASAAPAIRATFGNM. His267 is a binding site for heme b.

Belongs to the peroxidase family. Peroxidase/catalase subfamily. Homodimer or homotetramer. The cofactor is heme b. In terms of processing, formation of the three residue Trp-Tyr-Met cross-link is important for the catalase, but not the peroxidase activity of the enzyme.

The catalysed reaction is H2O2 + AH2 = A + 2 H2O. It catalyses the reaction 2 H2O2 = O2 + 2 H2O. Functionally, bifunctional enzyme with both catalase and broad-spectrum peroxidase activity. This Cronobacter sakazakii (strain ATCC BAA-894) (Enterobacter sakazakii) protein is Catalase-peroxidase.